Reading from the N-terminus, the 720-residue chain is Pro-neuregulin-3, membrane-bound isoform (720 aa).

Residues 1–360 are Extracellular-facing; the sequence is MSEGAAAASP…MESEEVYQRQ (360 aa). 3 disordered regions span residues 28–48, 119–223, and 246–280; these read AAAA…AAEP, SSFP…AMPS, and PFQD…TTYS. Gly residues predominate over residues 34–44; the sequence is AGGGPDGGGEG. Residues 127–148 show a composition bias toward low complexity; the sequence is TTTTTTSTTSPATPSAGGAASS. The segment covering 149–163 has biased composition (polar residues); sequence RTPNRISTRLTTITR. 2 stretches are compositionally biased toward low complexity: residues 187-205 and 250-271; these read TAAP…SSST and AASS…TSTS. One can recognise an EGF-like domain in the interval 286 to 329; it reads HFKPCRDKDLAYCLNDGECFVIETLTGSHKHCRCKEGYQGVRCD. 3 cysteine pairs are disulfide-bonded: Cys290–Cys304, Cys298–Cys317, and Cys319–Cys328. Residues 361 to 381 form a helical membrane-spanning segment; it reads VLSISCIIFGIVIVGMFCAAF. Residues 382-720 lie on the Cytoplasmic side of the membrane; it reads YFKSKKQAKQ…EIQRDSALTK (339 aa). The disordered stretch occupies residues 451–481; sequence PQSFPEVPSPDRGSQSVKHHRSLSSCCSPGQ.

This sequence belongs to the neuregulin family. In terms of assembly, interacts with ERBB4. In terms of processing, proteolytic cleavage close to the plasma membrane on the external face leads to the release of the soluble growth factor form. Extensive glycosylation precedes the proteolytic cleavage. Isoform 3 is glycosylated. Highly expressed in most regions of the brain with the exception of corpus callosum. Expressed at lower level in testis. Not detected in heart, placenta, lung, liver, skeletal muscle, kidney, pancreas, spleen, thymus, prostate, ovary, small intestine, colon and peripheral blood leukocytes.

It localises to the cell membrane. The protein resides in the secreted. In terms of biological role, direct ligand for the ERBB4 tyrosine kinase receptor. Binding results in ligand-stimulated tyrosine phosphorylation and activation of the receptor. Does not bind to the EGF receptor, ERBB2 or ERBB3 receptors. May be a survival factor for oligodendrocytes. The chain is Pro-neuregulin-3, membrane-bound isoform (NRG3) from Homo sapiens (Human).